We begin with the raw amino-acid sequence, 110 residues long: NADH dehydrogenase [ubiquinone] iron-sulfur protein 6, mitochondrial (110 aa).

The transit peptide at 1 to 22 directs the protein to the mitochondrion; the sequence is MASNLLKALIRSQILPSSRRNF.

This sequence belongs to the complex I NDUFS6 subunit family. Complex I is composed of at least 49 different subunits. This is a component of the iron-sulfur (IP) fragment of the enzyme.

The protein resides in the mitochondrion inner membrane. Functionally, accessory subunit of the mitochondrial membrane respiratory chain NADH dehydrogenase (Complex I), that is believed not to be involved in catalysis. Complex I functions in the transfer of electrons from NADH to the respiratory chain. The immediate electron acceptor for the enzyme is believed to be ubiquinone. The polypeptide is NADH dehydrogenase [ubiquinone] iron-sulfur protein 6, mitochondrial (Arabidopsis thaliana (Mouse-ear cress)).